We begin with the raw amino-acid sequence, 902 residues long: U3 small nucleolar RNA-associated protein 21 homolog (902 aa).

14 WD repeats span residues 40-71 (DIEARGTHFLVTTSVGNTFQTYDCEKLNLLFV), 80-110 (TCLKSFKDFMLVAAGSKIFAYKRGKIIWDID), 119-154 (THLDAFGEWIIACTSSRHVYVWKHASKYSVPELHTT), 164-198 (TSLLHPSTYLNKILLGFSDGALQIWNLRVSKRVHE), 206-243 (GITSLTQAPVLDVLAVGTISGRIVIFNLKNGSILMEFK), 249-284 (LSCSFRTDGTPILASSNPIGDLSFWDLSKRRIQNVT), 289-332 (FGSL…RSRN), 339-373 (SFVKFYGKSVHFLISAATDRSLRAVSLYQDSQSTE), 399-438 (TALSSSNTREKYWDNVLTAHKNDSSARTWNWKSKTLGQHV), 447-481 (VRSVCVSCCGNFGLIGSSKGVVDVYNMQSGIKRKS), 492-528 (VTAVMLDNVNRILVTASLDGILKFWDFNKGNLIDSLD), 533-568 (ITHAIYQHSSDLVAVACDDFGIRIVDVQTRKIVREL), 570-611 (GHSN…DSIS), and 613-651 (PSVCTSLTFAPTGDYLATTHVDQVGISLWTNLSMFKHVS).

Interacts with snoRNA U3. Interacts with MPP10. Component of the ribosomal small subunit (SSU) processome composed of at least 40 protein subunits and snoRNA U3.

It localises to the nucleus. It is found in the nucleolus. Involved in nucleolar processing of pre-18S ribosomal RNA and ribosome assembly. This chain is U3 small nucleolar RNA-associated protein 21 homolog, found in Schizosaccharomyces pombe (strain 972 / ATCC 24843) (Fission yeast).